The following is a 750-amino-acid chain: EF-hand domain-containing family member C2 (750 aa).

3 consecutive DM10 domains span residues 75–182, 226–368, and 430–537; these read DKQV…KKIG, DGKV…RTKY, and ISNI…ENNT. In terms of domain architecture, EF-hand spans 557 to 592; it reads SKSREITQVFAAADYNHTKVVPYNTFRDILMSITMG.

As to quaternary structure, microtubule inner protein component of sperm flagellar doublet microtubules.

It localises to the cytoplasm. The protein localises to the cytoskeleton. It is found in the cilium axoneme. Its subcellular location is the flagellum axoneme. In terms of biological role, microtubule inner protein (MIP) part of the dynein-decorated doublet microtubules (DMTs) in cilia axoneme, which is required for motile cilia beating. This Mus musculus (Mouse) protein is EF-hand domain-containing family member C2 (Efhc2).